A 465-amino-acid polypeptide reads, in one-letter code: Chromosomal replication initiator protein DnaA (465 aa).

Residues 1–85 are domain I, interacts with DnaA modulators; it reads MSGFWESCLQ…IALVIGSGKA (85 aa). The tract at residues 85-129 is domain II; sequence ATAARIQATTTDSGQNAPANPATTSEKRTAASEKARGKGSNYEKS. Residues 93 to 108 are compositionally biased toward polar residues; sequence TTTDSGQNAPANPATT. Residues 93-125 are disordered; the sequence is TTTDSGQNAPANPATTSEKRTAASEKARGKGSN. Residues 109–125 show a composition bias toward basic and acidic residues; it reads SEKRTAASEKARGKGSN. The domain III, AAA+ region stretch occupies residues 130 to 346; it reads RLFPSFTFDN…GALKKVLAYS (217 aa). ATP contacts are provided by Gly174, Gly176, Lys177, and Thr178. Residues 347–465 form a domain IV, binds dsDNA region; that stretch reads SFHGRVIALD…LHVLLQVLKG (119 aa).

Belongs to the DnaA family. In terms of assembly, oligomerizes as a right-handed, spiral filament on DNA at oriC.

It is found in the cytoplasm. Its function is as follows. Plays an essential role in the initiation and regulation of chromosomal replication. ATP-DnaA binds to the origin of replication (oriC) to initiate formation of the DNA replication initiation complex once per cell cycle. Binds the DnaA box (a 9 base pair repeat at the origin) and separates the double-stranded (ds)DNA. Forms a right-handed helical filament on oriC DNA; dsDNA binds to the exterior of the filament while single-stranded (ss)DNA is stabiized in the filament's interior. The ATP-DnaA-oriC complex binds and stabilizes one strand of the AT-rich DNA unwinding element (DUE), permitting loading of DNA polymerase. After initiation quickly degrades to an ADP-DnaA complex that is not apt for DNA replication. Binds acidic phospholipids. The polypeptide is Chromosomal replication initiator protein DnaA (Dechloromonas aromatica (strain RCB)).